A 329-amino-acid polypeptide reads, in one-letter code: DNA-directed RNA polymerase subunit alpha (329 aa).

The interval 1-235 (MQGSVTEFLK…EQLEAFVDLR (235 aa)) is alpha N-terminal domain (alpha-NTD). The alpha C-terminal domain (alpha-CTD) stretch occupies residues 249–329 (FDPILLRPVD…NWPPASIADE (81 aa)).

Belongs to the RNA polymerase alpha chain family. In terms of assembly, homodimer. The RNAP catalytic core consists of 2 alpha, 1 beta, 1 beta' and 1 omega subunit. When a sigma factor is associated with the core the holoenzyme is formed, which can initiate transcription.

The enzyme catalyses RNA(n) + a ribonucleoside 5'-triphosphate = RNA(n+1) + diphosphate. In terms of biological role, DNA-dependent RNA polymerase catalyzes the transcription of DNA into RNA using the four ribonucleoside triphosphates as substrates. This Yersinia pestis bv. Antiqua (strain Antiqua) protein is DNA-directed RNA polymerase subunit alpha.